Consider the following 653-residue polypeptide: MEVAMVSAESSGCNSHMPYGYAAQARARERERLAHSRAAAAAAVAAATAAVEGSGGSGGGSHHHHQSRGACTSHDPQSSRGSRRRRRQRSEKKKAHYRQSSFPHCSDLMPSGSEEKILRELSEEEEDEEEEEEEEEEGRFYYSEDDHGDECSYTDLLPQDEGGGGYSSVRYSDCCERVVINVSGLRFETQMKTLAQFPETLLGDPEKRTQYFDPLRNEYFFDRNRPSFDAILYYYQSGGRLKRPVNVPFDIFTEEVKFYQLGEEALLKFREDEGFVREEEDRALPENEFKKQIWLLFEYPESSSPARGIAIVSVLVILISIVIFCLETLPEFRDDRDLVMALSAGGHGGLLNDTSAPHLENSGHTIFNDPFFIVETVCIVWFSFEFVVRCFACPSQALFFKNIMNIIDIVSILPYFITLGTDLAQQQGGGNGQQQQAMSFAILRIIRLVRVFRIFKLSRHSKGLQILGHTLRASMRELGLLIFFLFIGVILFSSAVYFAEADEPTTHFQSIPDAFWWAVVTMTTVGYGDMKPITVGGKIVGSLCAIAGVLTIALPVPVIVSNFNYFYHRETENEEQTQLTQNAVSCPYLPSNLLKKFRSSTSSSLGDKSEYLEMEEGVKESLCAKEEKCQGKGDDSETDKNNCSNAKAVETDV.

Residues 1-304 are Cytoplasmic-facing; the sequence is MEVAMVSAES…LLFEYPESSS (304 aa). A disordered region spans residues 24 to 148; sequence QARARERERL…RFYYSEDDHG (125 aa). Residues 36-52 are compositionally biased toward low complexity; it reads SRAAAAAAVAAATAAVE. The segment covering 81–97 has biased composition (basic residues); the sequence is GSRRRRRQRSEKKKAHY. Ser90 carries the phosphoserine; by PKA modification. Position 122 is a phosphoserine (Ser122). Positions 122–137 are enriched in acidic residues; sequence SEEEEDEEEEEEEEEE. A helical transmembrane segment spans residues 305 to 326; the sequence is PARGIAIVSVLVILISIVIFCL. Residues 327–370 are Extracellular-facing; sequence ETLPEFRDDRDLVMALSAGGHGGLLNDTSAPHLENSGHTIFNDP. Asn352 carries N-linked (GlcNAc...) asparagine glycosylation. A helical transmembrane segment spans residues 371-392; that stretch reads FFIVETVCIVWFSFEFVVRCFA. Topologically, residues 393–403 are cytoplasmic; that stretch reads CPSQALFFKNI. Residues 404-424 form a helical membrane-spanning segment; that stretch reads MNIIDIVSILPYFITLGTDLA. The Extracellular segment spans residues 425–439; that stretch reads QQQGGGNGQQQQAMS. The chain crosses the membrane as a helical; Voltage-sensor span at residues 440–460; it reads FAILRIIRLVRVFRIFKLSRH. At 461-475 the chain is on the cytoplasmic side; that stretch reads SKGLQILGHTLRASM. Residues 462-475 form an S4-S5 linker region; that stretch reads KGLQILGHTLRASM. The chain crosses the membrane as a helical span at residues 476 to 497; the sequence is RELGLLIFFLFIGVILFSSAVY. At 498 to 511 the chain is on the extracellular side; sequence FAEADEPTTHFQSI. The helical intramembrane region spans 512 to 523; it reads PDAFWWAVVTMT. Residues 524 to 529 carry the Selectivity filter motif; that stretch reads TVGYGD. An intramembrane segment occupies 524–531; the sequence is TVGYGDMK. Topologically, residues 532 to 538 are extracellular; the sequence is PITVGGK. The chain crosses the membrane as a helical span at residues 539-567; that stretch reads IVGSLCAIAGVLTIALPVPVIVSNFNYFY. Residues 568–653 are Cytoplasmic-facing; sequence HRETENEEQT…SNAKAVETDV (86 aa). Ser599 is modified (phosphoserine; by PKA). The segment covering 629–640 has biased composition (basic and acidic residues); it reads CQGKGDDSETDK. Residues 629–653 are disordered; sequence CQGKGDDSETDKNNCSNAKAVETDV. Positions 651–653 match the PDZ-binding motif; it reads TDV.

This sequence belongs to the potassium channel family. A (Shaker) (TC 1.A.1.2) subfamily. Kv1.4/KCNA4 sub-subfamily. As to quaternary structure, homotetramer and heterotetramer of potassium channel proteins. Interacts with KCNAB1 and KCNAB2. Interacts with DLG1, DLG2 and DLG4 via their PDZ domains. Interacts with SIGMAR1. Detected in a complex with KCNA1. Interacts with KCNA2. Part of a complex containing KCNA1, KCNAB1 and LGI1. Interacts (via cytoplasmic N-terminal domain) with KCNRG. In terms of tissue distribution, expressed in brain, and at lower levels in the testis, lung, kidney, colon and heart. Detected in heart ventricle.

It localises to the cell membrane. Its subcellular location is the cell projection. The protein localises to the axon. The catalysed reaction is K(+)(in) = K(+)(out). Inhibited by 4-aminopyridine (4-AP), but not by tetraethylammonium (TEA) and charybdotoxin (CTX). Functionally, voltage-gated potassium channel that mediates transmembrane potassium transport in excitable membranes. Forms tetrameric potassium-selective channels through which potassium ions pass in accordance with their electrochemical gradient. The channel alternates between opened and closed conformations in response to the voltage difference across the membrane. Can form functional homotetrameric channels and heterotetrameric channels that contain variable proportions of KCNA1, KCNA2, KCNA4, KCNA5, and possibly other family members as well; channel properties depend on the type of alpha subunits that are part of the channel. Channel properties are modulated by cytoplasmic beta subunits that regulate the subcellular location of the alpha subunits and promote rapid inactivation. In vivo, membranes probably contain a mixture of heteromeric potassium channel complexes, making it difficult to assign currents observed in intact tissues to any particular potassium channel family member. Homotetrameric KCNA4 forms a potassium channel that opens in response to membrane depolarization, followed by rapid spontaneous channel closure. Likewise, a heterotetrameric channel formed by KCNA1 and KCNA4 shows rapid inactivation. The polypeptide is Potassium voltage-gated channel subfamily A member 4 (KCNA4) (Homo sapiens (Human)).